A 392-amino-acid polypeptide reads, in one-letter code: Formate-dependent phosphoribosylglycinamide formyltransferase (392 aa).

N(1)-(5-phospho-beta-D-ribosyl)glycinamide contacts are provided by residues 22–23 (EL) and Glu-82. ATP contacts are provided by residues Arg-114, Lys-155, 160-165 (SSGKGQ), 195-198 (EGVV), and Glu-203. The 190-residue stretch at 119 to 308 (RLAAEELQLP…EFALHVRAFL (190 aa)) folds into the ATP-grasp domain. Positions 267 and 279 each coordinate Mg(2+). N(1)-(5-phospho-beta-D-ribosyl)glycinamide is bound by residues Asp-286, Lys-355, and 362–363 (RR).

This sequence belongs to the PurK/PurT family. As to quaternary structure, homodimer.

It catalyses the reaction N(1)-(5-phospho-beta-D-ribosyl)glycinamide + formate + ATP = N(2)-formyl-N(1)-(5-phospho-beta-D-ribosyl)glycinamide + ADP + phosphate + H(+). Its pathway is purine metabolism; IMP biosynthesis via de novo pathway; N(2)-formyl-N(1)-(5-phospho-D-ribosyl)glycinamide from N(1)-(5-phospho-D-ribosyl)glycinamide (formate route): step 1/1. Its function is as follows. Involved in the de novo purine biosynthesis. Catalyzes the transfer of formate to 5-phospho-ribosyl-glycinamide (GAR), producing 5-phospho-ribosyl-N-formylglycinamide (FGAR). Formate is provided by PurU via hydrolysis of 10-formyl-tetrahydrofolate. The polypeptide is Formate-dependent phosphoribosylglycinamide formyltransferase (Shigella boydii serotype 4 (strain Sb227)).